The primary structure comprises 160 residues: Nucleotide-binding protein VSAL_I1728 (160 aa).

It belongs to the YajQ family.

Its function is as follows. Nucleotide-binding protein. The polypeptide is Nucleotide-binding protein VSAL_I1728 (Aliivibrio salmonicida (strain LFI1238) (Vibrio salmonicida (strain LFI1238))).